The chain runs to 1057 residues: Atrial natriuretic peptide receptor 1 (1057 aa).

The first 28 residues, 1–28 (MPGSRRVRPRLRALLLLPPLLLLRSGHA), serve as a signal peptide directing secretion. Over 29–469 (SDLTVAVVLP…CNQDHFSTLE (441 aa)) the chain is Extracellular. Asn41 carries an N-linked (GlcNAc...) asparagine glycan. Ser81, Gly113, and Cys114 together coordinate chloride. Cystine bridges form between Cys88–Cys114 and Cys192–Cys241. N-linked (GlcNAc...) asparagine glycosylation is found at Asn208, Asn334, Asn375, Asn382, and Asn423. Cys451 and Cys460 are oxidised to a cystine. A helical transmembrane segment spans residues 470–490 (VLALVGSLSLVSFLIVSFFIY). Residues 491–1057 (RKMQLEKELV…LGERGCSTRG (567 aa)) are Cytoplasmic-facing. Residues Ser515 and Ser525 each carry the phosphoserine modification. The 278-residue stretch at 524 to 801 (GSRLTLSGRG…QIRLALRKFN (278 aa)) folds into the Protein kinase domain. A Phosphothreonine modification is found at Thr528. Residues Ser530, Ser534, and Ser538 each carry the phosphoserine modification. Position 541 is a phosphothreonine (Thr541). The 131-residue stretch at 872-1002 (TIYFSDIVGF…DTVNTASRME (131 aa)) folds into the Guanylate cyclase domain.

The protein belongs to the adenylyl cyclase class-4/guanylyl cyclase family. Homodimer. Post-translationally, phosphorylation of the protein kinase-like domain is required for full activation by ANP.

Its subcellular location is the membrane. It carries out the reaction GTP = 3',5'-cyclic GMP + diphosphate. In terms of biological role, receptor for the atrial natriuretic peptide NPPA/ANP and the brain natriuretic peptide NPPB/BNP which are potent vasoactive hormones playing a key role in cardiovascular homeostasis. Plays an essential role in the regulation of endothelial cell senescence and vascular aging. Upon activation by ANP or BNP, stimulates the production of cyclic guanosine monophosphate (cGMP) that promotes vascular tone and volume homeostasis by activation of protein kinase cGMP-dependent 1/PRKG1 and subsequently PRKAA1, thereby controlling blood pressure and maintaining cardiovascular homeostasis. The sequence is that of Atrial natriuretic peptide receptor 1 (Npr1) from Mus musculus (Mouse).